We begin with the raw amino-acid sequence, 160 residues long: Large ribosomal subunit protein uL11 (160 aa).

Belongs to the universal ribosomal protein uL11 family. As to quaternary structure, part of the ribosomal stalk of the 50S ribosomal subunit. Interacts with L10 and the large rRNA to form the base of the stalk. L10 forms an elongated spine to which L12 dimers bind in a sequential fashion forming a multimeric L10(L12)X complex.

Functionally, forms part of the ribosomal stalk which helps the ribosome interact with GTP-bound translation factors. The polypeptide is Large ribosomal subunit protein uL11 (Nanoarchaeum equitans (strain Kin4-M)).